We begin with the raw amino-acid sequence, 336 residues long: MTQHFKTFGVIGAGAWGTAIAQMLAREGQTVHLWALEPEVAAAINTARENTAFLKGVPLKPEIRATNKLEDLGLADAIFAVAPAQHTRTTLRALRASLRPGTPVVLCSKGIELATGEFMTQVLKDELPEAIPAVMSGPSFAIDVAKGLPTAVTLAIEDTRLGTELIQAISTPTFRPYLGTDLLGAEVGGSVKNVLAIACGIALGKGLGRSAHAALIARGYAEMTRLALTLGAEAETLTGLSGLGDLVLTCSSETSRNMSLGLALGKGETLASILAARNAVTEGVATAPVLRRLARSQGIEMPICEAVAAVIEGEITVDDAITALLMRPVKAEAVKP.

The NADPH site is built by Trp-16 and Lys-109. Sn-glycerol 3-phosphate is bound by residues Lys-109, Gly-137, and Ser-139. Ala-141 is a binding site for NADPH. Sn-glycerol 3-phosphate contacts are provided by Lys-192, Asp-245, Ser-255, Arg-256, and Asn-257. The active-site Proton acceptor is the Lys-192. Arg-256 contacts NADPH. NADPH contacts are provided by Val-280 and Glu-282.

Belongs to the NAD-dependent glycerol-3-phosphate dehydrogenase family.

It localises to the cytoplasm. It carries out the reaction sn-glycerol 3-phosphate + NAD(+) = dihydroxyacetone phosphate + NADH + H(+). The catalysed reaction is sn-glycerol 3-phosphate + NADP(+) = dihydroxyacetone phosphate + NADPH + H(+). Its pathway is membrane lipid metabolism; glycerophospholipid metabolism. In terms of biological role, catalyzes the reduction of the glycolytic intermediate dihydroxyacetone phosphate (DHAP) to sn-glycerol 3-phosphate (G3P), the key precursor for phospholipid synthesis. This chain is Glycerol-3-phosphate dehydrogenase [NAD(P)+], found in Hyphomonas neptunium (strain ATCC 15444).